A 63-amino-acid polypeptide reads, in one-letter code: Cecropin-1/3 (63 aa).

Residues 1 to 23 form the signal peptide; sequence MNFYKVFIFVALILAISLGQSEA. Residue arginine 62 is modified to Arginine amide.

The protein belongs to the cecropin family.

It localises to the secreted. Functionally, cecropins have lytic and antibacterial activity against several Gram-positive and Gram-negative bacteria. The polypeptide is Cecropin-1/3 (Cec1) (Drosophila virilis (Fruit fly)).